The sequence spans 275 residues: Protein FAM210A (275 aa).

The interval 68–108 (SSQPADTPRKVPEEREPLTSATEVPKQSPVESDASDPDPLQ) is disordered. Residues 74–84 (TPRKVPEEREP) show a composition bias toward basic and acidic residues. Residues 109–221 (DKSISLVQRF…GYMSTPPPVK (113 aa)) form the DUF1279 domain. A helical transmembrane segment spans residues 128 to 148 (VMIPVHLVTSTVWFGSFYYAA). A coiled-coil region spans residues 221–271 (KEYLQDRMEETKDKITEKMEETKDKITEKMEETKDKITEKIQETKDKVSFK).

The protein belongs to the FAM210 family. In terms of assembly, interacts with ATAD3A.

The protein localises to the membrane. The protein resides in the mitochondrion. Its subcellular location is the cytoplasm. Functionally, may play a role in the structure and strength of both muscle and bone. This Gallus gallus (Chicken) protein is Protein FAM210A (FAM210A).